The following is an 881-amino-acid chain: Glutamate--tRNA ligase (881 aa).

Residues 1–480 (MSVRVRLAPS…ILRFKKSIGQ (480 aa)) form a glutamyl-tRNA synthetase region. Residues 9–19 (PSPTGNLHIGT) carry the 'HIGH' region motif. The 'KMSKS' region motif lies at 248–252 (KLSKR). An ATP-binding site is contributed by K251. The unknown stretch occupies residues 481–881 (EIEDTKIEDT…IKREIFGKPS (401 aa)). A compositionally biased stretch (basic and acidic residues) spans 488–502 (EDTKKAETTPHKSKG). The interval 488–747 (EDTKKAETTP…PTATDAETRE (260 aa)) is disordered. A compositionally biased stretch (low complexity) spans 522-548 (QTQTTKPPKKGQTATPVATTPTATDVT). Over residues 549–562 (ENTSVGTQETQSQI) the composition is skewed to polar residues. Residues 563–576 (TTPVATTPTATDVT) are compositionally biased toward low complexity. The segment covering 577-590 (ENTSVGTQETQSQI) has biased composition (polar residues). A compositionally biased stretch (low complexity) spans 591-604 (TTPVATTPTATDVT). Residues 605–618 (ENTSVETQETQSQI) show a composition bias toward polar residues. A compositionally biased stretch (low complexity) spans 619–632 (TTPVATTPTATDVT). Polar residues predominate over residues 633–646 (ENTSVETQETQSQI). Low complexity predominate over residues 647–660 (TTPVATTPTATDVT). The segment covering 661 to 674 (ENTSVGTQETQSQI) has biased composition (polar residues). Over residues 675–688 (TTPVATTPTATDVT) the composition is skewed to low complexity. Positions 689–702 (ENTSVETQETQSQI) are enriched in polar residues. Positions 703–720 (TTPVATTSTATDVTENTS) are enriched in low complexity. Over residues 721–730 (VETQETQSQI) the composition is skewed to polar residues. Residues 731–742 (TTPVATTPTATD) are compositionally biased toward low complexity. Helical transmembrane passes span 809–829 (LFGWLALVILTFTFMAVVIEA) and 832–852 (GIPILSIIFELIGVIYLVWFV).

Belongs to the class-I aminoacyl-tRNA synthetase family. Glutamate--tRNA ligase type 1 subfamily. In terms of assembly, monomer.

The protein resides in the cytoplasm. The protein localises to the cell membrane. It catalyses the reaction tRNA(Glu) + L-glutamate + ATP = L-glutamyl-tRNA(Glu) + AMP + diphosphate. Functionally, catalyzes the attachment of glutamate to tRNA(Glu) in a two-step reaction: glutamate is first activated by ATP to form Glu-AMP and then transferred to the acceptor end of tRNA(Glu). The chain is Glutamate--tRNA ligase (gltX) from Trichodesmium erythraeum (strain IMS101).